Consider the following 210-residue polypeptide: Shikimate kinase (210 aa).

Residue 34–39 (GVGKSV) coordinates ATP. Position 38 (Ser38) interacts with Mg(2+). Substrate is bound by residues Asp56, Arg80, and Gly102. Arg140 is a binding site for ATP. Arg159 contacts substrate.

The protein belongs to the shikimate kinase family. In terms of assembly, monomer. Requires Mg(2+) as cofactor.

The protein resides in the cytoplasm. It catalyses the reaction shikimate + ATP = 3-phosphoshikimate + ADP + H(+). The protein operates within metabolic intermediate biosynthesis; chorismate biosynthesis; chorismate from D-erythrose 4-phosphate and phosphoenolpyruvate: step 5/7. Functionally, catalyzes the specific phosphorylation of the 3-hydroxyl group of shikimic acid using ATP as a cosubstrate. This is Shikimate kinase from Bartonella henselae (strain ATCC 49882 / DSM 28221 / CCUG 30454 / Houston 1) (Rochalimaea henselae).